Here is a 265-residue protein sequence, read N- to C-terminus: UDP-N-acetylenolpyruvoylglucosamine reductase (265 aa).

The FAD-binding PCMH-type domain maps to 15–169 (GVGGPAELWT…TRVRLKLKER (155 aa)). Arginine 149 is an active-site residue. The disordered stretch occupies residues 182–203 (DRARKGQPKRKSAGCAFKNPPG). The active-site Proton donor is the cysteine 196.

Belongs to the MurB family. The cofactor is FAD.

It is found in the cytoplasm. It carries out the reaction UDP-N-acetyl-alpha-D-muramate + NADP(+) = UDP-N-acetyl-3-O-(1-carboxyvinyl)-alpha-D-glucosamine + NADPH + H(+). It functions in the pathway cell wall biogenesis; peptidoglycan biosynthesis. Cell wall formation. The chain is UDP-N-acetylenolpyruvoylglucosamine reductase from Thermus thermophilus (strain ATCC 27634 / DSM 579 / HB8).